Consider the following 175-residue polypeptide: Isopentenyl-diphosphate Delta-isomerase (175 aa).

Mn(2+) contacts are provided by His-23 and His-30. The Nudix hydrolase domain occupies 28–162 (TLHLAFCVFV…PLRYTPWFRR (135 aa)). The active site involves Cys-65. His-67 provides a ligand contact to Mn(2+). Glu-85 serves as a coordination point for Mg(2+). Glu-111 and Glu-113 together coordinate Mn(2+). Glu-113 is a catalytic residue.

The protein belongs to the IPP isomerase type 1 family. Mg(2+) serves as cofactor. Requires Mn(2+) as cofactor.

Its subcellular location is the cytoplasm. It carries out the reaction isopentenyl diphosphate = dimethylallyl diphosphate. It participates in isoprenoid biosynthesis; dimethylallyl diphosphate biosynthesis; dimethylallyl diphosphate from isopentenyl diphosphate: step 1/1. Its function is as follows. Catalyzes the 1,3-allylic rearrangement of the homoallylic substrate isopentenyl (IPP) to its highly electrophilic allylic isomer, dimethylallyl diphosphate (DMAPP). The chain is Isopentenyl-diphosphate Delta-isomerase from Halorhodospira halophila (strain DSM 244 / SL1) (Ectothiorhodospira halophila (strain DSM 244 / SL1)).